A 363-amino-acid chain; its full sequence is GDSL esterase/lipase At1g29670 (363 aa).

A signal peptide spans 1–24 (MESYLTKWCVVLVLLCFGFSVVKA). S39 acts as the Nucleophile in catalysis. Active-site residues include D327 and H330.

It belongs to the 'GDSL' lipolytic enzyme family.

The protein resides in the secreted. The sequence is that of GDSL esterase/lipase At1g29670 from Arabidopsis thaliana (Mouse-ear cress).